A 236-amino-acid chain; its full sequence is Apoptosis regulator Bcl-2 (236 aa).

Positions 10–30 (DNREIVMKYIHYKLSQRGYEW) match the BH4 motif. Threonine 69 is subject to Phosphothreonine; by MAPK8. Serine 70 is subject to Phosphoserine; by MAPK8 and PKC. The residue at position 84 (serine 84) is a Phosphoserine; by MAPK8. The BH3 signature appears at 90 to 104 (VHLTLRRAGDDFSRR). Residues 133–152 (ELFRDGVNWGRIVAFFEFGG) carry the BH1 motif. Positions 184-199 (TWIQDNGGWDAFVELY) match the BH2 motif. A helical transmembrane segment spans residues 209–230 (FSWLSLKALLSLALVGACITLG).

The protein belongs to the Bcl-2 family. Forms homodimers, and heterodimers with BAX, BAD, BAK and Bcl-X(L). Heterodimerization with BAX requires intact BH1 and BH2 motifs, and is necessary for anti-apoptotic activity. Component of the complex, at least composed of LRPPRC, BECN1 and BCL2; the interactions prevent BECN1 from forming an autophagy-inducing complex with PIK3C3. Interacts with EI24. Also interacts with APAF1, BBC3, BCL2L1, BNIPL, MRPL41 and TP53BP2. Binding to FKBP8 seems to target BCL2 to the mitochondria and probably interferes with the binding of BCL2 to its targets. Interacts with BAG1 in an ATP-dependent manner. Interacts with RAF1 (the 'Ser-338' and 'Ser-339' phosphorylated form). Interacts (via the BH4 domain) with EGLN3; the interaction prevents the formation of the BAX-BCL2 complex and inhibits the anti-apoptotic activity of BCL2. Interacts with G0S2; this interaction also prevents the formation of the anti-apoptotic BAX-BCL2 complex. Interacts with RTL10/BOP. Interacts with the SCF(FBXO10) complex. Interacts (via the loop between motifs BH4 and BH3) with NLRP1 (via LRR repeats), but not with NLRP2, NLRP3, NLRP4, PYCARD, nor MEFV. Interacts with GIMAP3/IAN4, GIMAP4/IAN1 and GIMAP5/IAN5. Interacts with BCAP31. Interacts with IRF3; the interaction is inhibited by Sendai virus infection. Interacts with BECN1; thereby inhibiting autophagy in non-starvation conditions. Interacts with AMBRA1; thereby inhibiting autophagy. In terms of processing, phosphorylation/dephosphorylation on Ser-70 regulates anti-apoptotic activity. Growth factor-stimulated phosphorylation on Ser-70 by PKC is required for the anti-apoptosis activity and occurs during the G2/M phase of the cell cycle. In the absence of growth factors, BCL2 appears to be phosphorylated by other protein kinases such as ERKs and stress-activated kinases. Phosphorylated by MAPK8/JNK1 at Thr-69, Ser-70 and Ser-84, which stimulates starvation-induced autophagy. Dephosphorylated by protein phosphatase 2A (PP2A). Proteolytically cleaved by caspases during apoptosis. The cleaved protein, lacking the BH4 motif, has pro-apoptotic activity, causes the release of cytochrome c into the cytosol promoting further caspase activity. Post-translationally, monoubiquitinated by PRKN, leading to an increase in its stability. Ubiquitinated by SCF(FBXO10), leading to its degradation by the proteasome.

It localises to the mitochondrion outer membrane. Its subcellular location is the nucleus membrane. The protein localises to the endoplasmic reticulum membrane. The protein resides in the cytoplasm. Its function is as follows. Suppresses apoptosis in a variety of cell systems including factor-dependent lymphohematopoietic and neural cells. Regulates cell death by controlling the mitochondrial membrane permeability. Appears to function in a feedback loop system with caspases. Inhibits caspase activity either by preventing the release of cytochrome c from the mitochondria and/or by binding to the apoptosis-activating factor (APAF-1). Also acts as an inhibitor of autophagy: interacts with BECN1 and AMBRA1 during non-starvation conditions and inhibits their autophagy function. May attenuate inflammation by impairing NLRP1-inflammasome activation, hence CASP1 activation and IL1B release. The chain is Apoptosis regulator Bcl-2 (BCL2) from Canis lupus familiaris (Dog).